The chain runs to 496 residues: Endoglucanase (496 aa).

Positions 1–23 (MGYHSVFIAVFLWSSMVCHNGLA) are cleaved as a signal peptide. Asp-93 acts as the Nucleophile in catalysis. Active-site residues include His-415, Asp-467, and Glu-476.

Belongs to the glycosyl hydrolase 9 (cellulase E) family.

The enzyme catalyses Endohydrolysis of (1-&gt;4)-beta-D-glucosidic linkages in cellulose, lichenin and cereal beta-D-glucans.. Its function is as follows. Involved in ripening fruit process. The sequence is that of Endoglucanase from Phaseolus vulgaris (Kidney bean).